We begin with the raw amino-acid sequence, 90 residues long: Serine protease inhibitor Cvsi-1 (90 aa).

The first 19 residues, 1 to 19, serve as a signal peptide directing secretion; that stretch reads MDVVRTLILCVCLFGLTFA.

Post-translationally, contains 6 disulfide bonds. Detected in hemolymph (at protein level). In oysters collected in the summer the expression level is highest in the digestive gland with low levels of expression in gill, mantle, labial palp, style-sac midgut, gonad, heart, and hemocyte. In winter expression levels are higher in all tissues with highest expression levels observed in the digestive gland. Within the digestive gland expression is limited to the basophil cells of the digestive diverticula.

The protein localises to the secreted. Slow-binding inhibitor of serine proteases. The inhibitor rapidly binds to the protease forming a weak enzyme-inhibitor complex, and this is followed by a slow isomerization forming a tight-binding enzyme-inhibitor complex. Active against subtilisin A, perkinsin and trypsin with dissociation constants of 0.29 nM, 13.7 nM and 17.7 nM respectively. Not active against thermolysin, papain or pepsin. Has antiparasitic activity against the protozoan P.marinus. This is Serine protease inhibitor Cvsi-1 from Crassostrea virginica (Eastern oyster).